The chain runs to 326 residues: tRNA-modifying protein YgfZ (326 aa).

2 residues coordinate folate: tryptophan 27 and tryptophan 189.

It belongs to the tRNA-modifying YgfZ family.

It localises to the cytoplasm. Functionally, folate-binding protein involved in regulating the level of ATP-DnaA and in the modification of some tRNAs. It is probably a key factor in regulatory networks that act via tRNA modification, such as initiation of chromosomal replication. The polypeptide is tRNA-modifying protein YgfZ (Escherichia coli (strain SE11)).